The primary structure comprises 215 residues: Pyrrolidone-carboxylate peptidase (215 aa).

Active-site residues include glutamate 78, cysteine 141, and histidine 165.

It belongs to the peptidase C15 family. Homotetramer.

It localises to the cytoplasm. It carries out the reaction Release of an N-terminal pyroglutamyl group from a polypeptide, the second amino acid generally not being Pro.. Its function is as follows. Removes 5-oxoproline from various penultimate amino acid residues except L-proline. In Streptococcus pyogenes serotype M3 (strain SSI-1), this protein is Pyrrolidone-carboxylate peptidase.